Reading from the N-terminus, the 728-residue chain is Homoaconitase, mitochondrial (728 aa).

The transit peptide at 1-24 (MVAIPRLARLSVPAWALSARGRFY) directs the protein to the mitochondrion. C362, C422, and C425 together coordinate [4Fe-4S] cluster.

The protein belongs to the aconitase/IPM isomerase family. [4Fe-4S] cluster is required as a cofactor.

It localises to the mitochondrion. The enzyme catalyses (2R,3S)-homoisocitrate = cis-homoaconitate + H2O. It functions in the pathway amino-acid biosynthesis; L-lysine biosynthesis via AAA pathway; L-alpha-aminoadipate from 2-oxoglutarate: step 3/5. Functionally, catalyzes the reversible hydration of cis-homoaconitate to (2R,3S)-homoisocitrate, a step in the alpha-aminoadipate pathway for lysine biosynthesis. This is Homoaconitase, mitochondrial (LYS4) from Cryptococcus neoformans var. neoformans serotype D (strain B-3501A) (Filobasidiella neoformans).